The chain runs to 2492 residues: Transcriptional regulator ATRX (2492 aa).

The interval 1 to 147 (MTAEPMSESK…KDDFKGPEFR (147 aa)) is disordered. Residue lysine 10 forms a Glycyl lysine isopeptide (Lys-Gly) (interchain with G-Cter in SUMO2) linkage. Residues 17–27 (KLHDFLAHSSE) are compositionally biased toward basic and acidic residues. Residues serine 25 and serine 34 each carry the phosphoserine modification. The segment covering 40-57 (MNQNTDKISGSGSNSDMM) has biased composition (polar residues). A compositionally biased stretch (basic and acidic residues) spans 58 to 72 (ENSKEEGTSSSEKSK). Tyrosine 89 carries the phosphotyrosine modification. 2 positions are modified to phosphoserine: serine 92 and serine 112. The segment covering 92-108 (SDDEKPLDDETVNEDAS) has biased composition (acidic residues). Residues 135-147 (NEDKDDFKGPEFR) are compositionally biased toward basic and acidic residues. Residues lysine 138 and lysine 142 each participate in a glycyl lysine isopeptide (Lys-Gly) (interchain with G-Cter in SUMO2) cross-link. Residues 159–296 (KRGEDGLHGI…LEQLLQQNKK (138 aa)) enclose the ADD domain. The GATA-type; atypical zinc finger occupies 170-206 (SCTACGQQVNHFQKDSIYRHPSLQVLICKNCFKYYMS). A Phosphoserine modification is found at serine 213. The PHD-type; atypical zinc finger occupies 217 to 272 (DEQCRWCAEGGNLICCDFCHNAFCKKCILRNLGRKELSTIMDENNQWYCYICHPEP). Lysine 299 is covalently cross-linked (Glycyl lysine isopeptide (Lys-Gly) (interchain with G-Cter in SUMO2)). A Phosphoserine modification is found at serine 316. Lysine 438 participates in a covalent cross-link: Glycyl lysine isopeptide (Lys-Gly) (interchain with G-Cter in SUMO2). The span at 445-502 (KGEKPCALEKKDISKSEAKLSRKQVDSEHMHQNVPTEEQRTNKSTGGEHKKSDRKEEP) shows a compositional bias: basic and acidic residues. 2 disordered regions span residues 445-516 (KGEK…LDMD) and 535-576 (AMEV…GIKS). Over residues 550–567 (SGTEQEVESSSVKLNISS) the composition is skewed to polar residues. A PxVxL motif motif is present at residues 581-594 (KVTKELYVKLTPVS). At threonine 591 the chain carries Phosphothreonine. Residues 593–616 (VSLSNSPIKGADCQEVPQDKDGYK) form a disordered region. Serine 594 and serine 598 each carry phosphoserine. Residue lysine 623 forms a Glycyl lysine isopeptide (Lys-Gly) (interchain with G-Cter in SUMO1); alternate linkage. Residue lysine 623 forms a Glycyl lysine isopeptide (Lys-Gly) (interchain with G-Cter in SUMO2); alternate linkage. Position 634 is a phosphoserine (serine 634). A disordered region spans residues 649 to 956 (EESDLRRSPR…KHLKTKTCKK (308 aa)). Threonine 674 is modified (phosphothreonine). Serine 675, serine 677, serine 729, and serine 731 each carry phosphoserine. Residues 755–777 (NEIHTNHKTLYDLKTQAGKDDKG) show a composition bias toward basic and acidic residues. A phosphoserine mark is found at serine 784, serine 819, serine 849, serine 850, serine 875, and serine 876. The segment covering 843-864 (NTKDFDSSEDEKHSKKGMDNQG) has biased composition (basic and acidic residues). The segment covering 878–887 (DAERKQERET) has biased composition (basic and acidic residues). Phosphoserine is present on serine 889. Composition is skewed to basic and acidic residues over residues 894-909 (TVDK…DRLP) and 920-944 (GVDK…ETKE). The segment covering 945-955 (KSKHLKTKTCK) has biased composition (basic residues). Serine 962 bears the Phosphoserine mark. Lysine 967 carries the post-translational modification N6-acetyllysine. Positions 968 to 1004 (FLKKDQSDETSEDDKKQSKKGTEEKKKPSDFKKKVIK) are enriched in basic and acidic residues. The tract at residues 968–1479 (FLKKDQSDET…SKSPGKGRKK (512 aa)) is disordered. Serine 974 is modified (phosphoserine). At threonine 977 the chain carries Phosphothreonine. A Glycyl lysine isopeptide (Lys-Gly) (interchain with G-Cter in SUMO2) cross-link involves residue lysine 1004. Phosphoserine is present on residues serine 1011, serine 1012, and serine 1013. The segment covering 1015 to 1027 (GTEKLPEREEICH) has biased composition (basic and acidic residues). Basic residues predominate over residues 1045 to 1055 (KSKKIRDKTSK). Residues 1056–1082 (KKDELSDYAEKSTGKGDSCDSSEDKKS) are compositionally biased toward basic and acidic residues. Phosphoserine is present on serine 1061. Tyrosine 1063 is modified (phosphotyrosine). Positions 1090–1102 (EKKRCKLLGKSSR) are enriched in basic residues. Over residues 1103–1139 (KRQDCSSSDTEKYSMKEDGCNSSDKRLKRIELRERRN) the composition is skewed to basic and acidic residues. Over residues 1167-1195 (KKKQRTSSKKKAVIVKEKKRNSLRTSTKR) the composition is skewed to basic residues. The interval 1189-1326 (LRTSTKRKQA…KNQVNSESDS (138 aa)) is interaction with DAXX. A compositionally biased stretch (polar residues) spans 1233–1246 (LVLSSHTGFCQSSG). A phosphoserine mark is found at serine 1244, serine 1245, and serine 1253. Basic and acidic residues predominate over residues 1267–1281 (PENRIAKKMLLEEIK). Residues 1286 to 1297 (SDEDGSSDDEPE) show a composition bias toward acidic residues. Basic and acidic residues predominate over residues 1298–1308 (EGKKRTGKQNE). Residues serine 1322, serine 1324, and serine 1326 each carry the phosphoserine modification. A compositionally biased stretch (basic residues) spans 1334 to 1345 (PRYRHRLLRHKL). Phosphoserine occurs at positions 1348 and 1352. Composition is skewed to basic and acidic residues over residues 1353-1368 (GEEK…EVKG) and 1408-1417 (KKAELEENQR). Over residues 1419-1428 (YKQKKKRRRI) the composition is skewed to basic residues. Positions 1443–1468 (EEEEEEKEEEEEEEEEEEEEEEDEND) are enriched in acidic residues. Lysine 1488 is covalently cross-linked (Glycyl lysine isopeptide (Lys-Gly) (interchain with G-Cter in SUMO2)). Serine 1527 carries the post-translational modification Phosphoserine. A Phosphothreonine modification is found at threonine 1529. Residues 1581 to 1768 (KTKKSPGSGC…HCMVNFIKEN (188 aa)) form the Helicase ATP-binding domain. 1594 to 1601 (HCMGLGKT) provides a ligand contact to ATP. A DEGH box motif is present at residues 1719-1722 (DEGH). A phosphoserine mark is found at serine 1906 and serine 1913. Residues 1913–2000 (SDSDETSMSL…SSNPSSPAPD (88 aa)) form a disordered region. Positions 1929–1938 (KKKKKGKKGK) are enriched in basic residues. Lysine 1982 is covalently cross-linked (Glycyl lysine isopeptide (Lys-Gly) (interchain with G-Cter in SUMO1); alternate). Lysine 1982 is covalently cross-linked (Glycyl lysine isopeptide (Lys-Gly) (interchain with G-Cter in SUMO2); alternate). Residue lysine 1987 forms a Glycyl lysine isopeptide (Lys-Gly) (interchain with G-Cter in SUMO2) linkage. Low complexity predominate over residues 1990 to 1999 (SSSNPSSPAP). Serine 1992 and serine 1996 each carry phosphoserine. Positions 2010–2280 (DAEVLEHSGK…RKAAWAEYEA (271 aa)) are interaction with MECP2. Residues 2025-2205 (EILRMAEEIG…ERHFTMNELT (181 aa)) enclose the Helicase C-terminal domain. Position 2220 is a phosphoserine (serine 2220). Residues 2462–2492 (PVAGGMQPPPLQRAPPPMRSKNPGPSQGKSM) are disordered. Residues 2468-2479 (QPPPLQRAPPPM) are compositionally biased toward pro residues. Arginine 2474 and arginine 2480 each carry omega-N-methylarginine.

This sequence belongs to the SNF2/RAD54 helicase family. As to quaternary structure, interacts with DAXX to form the chromatin remodeling complex ATRX:DAXX. Probably binds EZH2. Binds annexin V in a calcium and phosphatidylcholine/phosphatidylserine-dependent manner. Interacts directly with CBX5 via the PxVxL motif. Interacts with RAD50, MRE11 and NBN; indicative for an association with the MRN complex. Interacts with histone MACROH2A1. Interacts with histone H3 peptides methylated at 'Lys-10' with preferences H3K9me3 &gt; H3K9me2 &gt; H3K9me1. Interacts with histone H3 peptides unmethylated at 'Lys-5' (H3K4me0). Interacts with MECP2, SMC1 and SMC3. Interacts with SETDB1, TRIM28 and ZNF274. Post-translationally, phosphorylated at serine residues during mitose. Phosphorylation may promote the release from the nuclear matrix and progression to mitosis. As to expression, ubiquitous.

It is found in the nucleus. The protein localises to the chromosome. It localises to the telomere. The protein resides in the PML body. It catalyses the reaction ATP + H2O = ADP + phosphate + H(+). In terms of biological role, involved in transcriptional regulation and chromatin remodeling. Facilitates DNA replication in multiple cellular environments and is required for efficient replication of a subset of genomic loci. Binds to DNA tandem repeat sequences in both telomeres and euchromatin and in vitro binds DNA quadruplex structures. May help stabilizing G-rich regions into regular chromatin structures by remodeling G4 DNA and incorporating H3.3-containing nucleosomes. Catalytic component of the chromatin remodeling complex ATRX:DAXX which has ATP-dependent DNA translocase activity and catalyzes the replication-independent deposition of histone H3.3 in pericentric DNA repeats outside S-phase and telomeres, and the in vitro remodeling of H3.3-containing nucleosomes. Its heterochromatin targeting is proposed to involve a combinatorial readout of histone H3 modifications (specifically methylation states of H3K9 and H3K4) and association with CBX5. Involved in maintaining telomere structural integrity in embryonic stem cells which probably implies recruitment of CBX5 to telomeres. Reports on the involvement in transcriptional regulation of telomeric repeat-containing RNA (TERRA) are conflicting; according to a report, it is not sufficient to decrease chromatin condensation at telomeres nor to increase expression of telomeric RNA in fibroblasts. May be involved in telomere maintenance via recombination in ALT (alternative lengthening of telomeres) cell lines. Acts as a negative regulator of chromatin incorporation of transcriptionally repressive histone MACROH2A1, particularily at telomeres and the alpha-globin cluster in erythroleukemic cells. Participates in the allele-specific gene expression at the imprinted IGF2/H19 gene locus. On the maternal allele, required for the chromatin occupancy of SMC1 and CTCTF within the H19 imprinting control region (ICR) and involved in esatblishment of histone tails modifications in the ICR. May be involved in brain development and facial morphogenesis. Binds to zinc-finger coding genes with atypical chromatin signatures and regulates its H3K9me3 levels. Forms a complex with ZNF274, TRIM28 and SETDB1 to facilitate the deposition and maintenance of H3K9me3 at the 3' exons of zinc-finger genes. This chain is Transcriptional regulator ATRX (ATRX), found in Homo sapiens (Human).